The following is a 328-amino-acid chain: Nicotianamine synthase 1 (328 aa).

It belongs to the nicotianamine synthase (NAS)-like family. In roots but not in leaves.

It catalyses the reaction 3 S-adenosyl-L-methionine = nicotianamine + 3 S-methyl-5'-thioadenosine + 3 H(+). Functionally, synthesizes nicotianamine, a polyamine that is the first intermediate in the synthesis of the phytosiderophores of the mugineic acid type found in gramineae which serves as a sensor for the physiological iron status within the plant, and/or might be involved in the transport of iron. This chain is Nicotianamine synthase 1 (NAS1), found in Hordeum vulgare (Barley).